The chain runs to 693 residues: Elongation factor G 1 (693 aa).

One can recognise a tr-type G domain in the interval Asn-4–His-281. GTP-binding positions include Ala-13–Thr-20, Asp-80–His-84, and Asn-134–Asp-137.

This sequence belongs to the TRAFAC class translation factor GTPase superfamily. Classic translation factor GTPase family. EF-G/EF-2 subfamily.

It is found in the cytoplasm. Catalyzes the GTP-dependent ribosomal translocation step during translation elongation. During this step, the ribosome changes from the pre-translocational (PRE) to the post-translocational (POST) state as the newly formed A-site-bound peptidyl-tRNA and P-site-bound deacylated tRNA move to the P and E sites, respectively. Catalyzes the coordinated movement of the two tRNA molecules, the mRNA and conformational changes in the ribosome. This Borreliella burgdorferi (strain ATCC 35210 / DSM 4680 / CIP 102532 / B31) (Borrelia burgdorferi) protein is Elongation factor G 1 (fusA).